The sequence spans 174 residues: Regulator of G-protein signaling 8 (174 aa).

Residues 46 to 162 (SFDILLSNKY…IRSKIYQDLL (117 aa)) form the RGS domain.

The protein resides in the cell membrane. Its subcellular location is the membrane. It localises to the perikaryon. The protein localises to the cell projection. It is found in the dendrite. The protein resides in the nucleus. Regulates G protein-coupled receptor signaling cascades, including signaling via muscarinic acetylcholine receptors and dopamine receptors. Inhibits signal transduction by increasing the GTPase activity of G protein alpha subunits, thereby driving them into their inactive GDP-bound form. Modulates the activity of potassium channels that are activated in response to G protein-coupled receptor signaling. The sequence is that of Regulator of G-protein signaling 8 (rgs8) from Danio rerio (Zebrafish).